A 347-amino-acid chain; its full sequence is NADH-ubiquinone oxidoreductase chain 2 (347 aa).

The next 11 membrane-spanning stretches (helical) occupy residues 1-21 (MNPM…SIVL), 25-45 (HWFL…PVLM), 68-88 (MILV…TIMI), 96-116 (MLIT…FWVP), 122-142 (VSLS…LSLL), 145-165 (IFPS…IMIG), 178-198 (IMAY…IYNP), 201-221 (SLLN…LLII), 239-259 (IVVS…PLTG), 274-294 (SSVM…FFYM), and 326-346 (MMSL…LITL).

It belongs to the complex I subunit 2 family. In terms of assembly, core subunit of respiratory chain NADH dehydrogenase (Complex I) which is composed of 45 different subunits. Interacts with TMEM242.

It is found in the mitochondrion inner membrane. It catalyses the reaction a ubiquinone + NADH + 5 H(+)(in) = a ubiquinol + NAD(+) + 4 H(+)(out). Core subunit of the mitochondrial membrane respiratory chain NADH dehydrogenase (Complex I) which catalyzes electron transfer from NADH through the respiratory chain, using ubiquinone as an electron acceptor. Essential for the catalytic activity and assembly of complex I. This chain is NADH-ubiquinone oxidoreductase chain 2, found in Sylvisorex lunaris (Moon forest shrew).